The following is a 454-amino-acid chain: Ribosomal protein uS12 methylthiotransferase RimO (454 aa).

Residues 19 to 129 (AKVGFVSLGC…VLAQVHEHVA (111 aa)) form the MTTase N-terminal domain. Residues C28, C64, C93, C161, C165, and C168 each coordinate [4Fe-4S] cluster. In terms of domain architecture, Radical SAM core spans 147-384 (LTPKHYAYLK…MAVQAKISSD (238 aa)). The region spanning 387 to 453 (QVRIGQEYLI…EHDVWGVRVE (67 aa)) is the TRAM domain.

This sequence belongs to the methylthiotransferase family. RimO subfamily. [4Fe-4S] cluster serves as cofactor.

Its subcellular location is the cytoplasm. The enzyme catalyses L-aspartate(89)-[ribosomal protein uS12]-hydrogen + (sulfur carrier)-SH + AH2 + 2 S-adenosyl-L-methionine = 3-methylsulfanyl-L-aspartate(89)-[ribosomal protein uS12]-hydrogen + (sulfur carrier)-H + 5'-deoxyadenosine + L-methionine + A + S-adenosyl-L-homocysteine + 2 H(+). Catalyzes the methylthiolation of an aspartic acid residue of ribosomal protein uS12. The sequence is that of Ribosomal protein uS12 methylthiotransferase RimO from Colwellia psychrerythraea (strain 34H / ATCC BAA-681) (Vibrio psychroerythus).